We begin with the raw amino-acid sequence, 258 residues long: DNA repair protein RecO (258 aa).

Belongs to the RecO family.

Involved in DNA repair and RecF pathway recombination. The protein is DNA repair protein RecO of Desulfatibacillum aliphaticivorans.